Reading from the N-terminus, the 154-residue chain is Large ribosomal subunit protein uL13 (154 aa).

This sequence belongs to the universal ribosomal protein uL13 family. Part of the 50S ribosomal subunit.

Its function is as follows. This protein is one of the early assembly proteins of the 50S ribosomal subunit, although it is not seen to bind rRNA by itself. It is important during the early stages of 50S assembly. This Rhodospirillum centenum (strain ATCC 51521 / SW) protein is Large ribosomal subunit protein uL13.